The following is a 391-amino-acid chain: MGEENQPNYTISQENWSLHRKGYDDQQRHQEKVQEAIKNNLPDLVTEESIVMSNGKDVVKIPIRSLDEYKIRYNYDKNKHVGQGNGDSKVGDVVARDGSGGQKQKGPGKGQGAGDAAGEDYYEAEVSILELEQAFFKELELPNLKRKEMDENRIEHVEFNDIRKTGLWGNIDKKRTMISAYKRNAMRGKASFHPIHQEDLKFRTWNEVLKPDSKAVVLAMMDTSGSMGIWEKYMARSFFFWMTRFLRTKYETVDIEFIAHHTEAKVVPEEEFFSKGESGGTICSSVYKKALELIDNKYSPDRYNIYPFHFSDGDNLTSDNARCVKLVEELMKKCNMFGYGEVNQYNRHSTLMSAYKNIKDENFRYYILKQKADVFHAMKSFFREESGEKMA.

The segment covering 1–16 has biased composition (polar residues); that stretch reads MGEENQPNYTISQENW. 2 disordered regions span residues 1–31 and 80–117; these read MGEENQPNYTISQENWSLHRKGYDDQQRHQE and HVGQGNGDSKVGDVVARDGSGGQKQKGPGKGQGAGDAA. Residues 21–31 are compositionally biased toward basic and acidic residues; the sequence is KGYDDQQRHQE. Residues 98 to 115 show a composition bias toward gly residues; the sequence is GSGGQKQKGPGKGQGAGD.

The protein belongs to the UPF0229 family.

This Bacillus anthracis (strain A0248) protein is UPF0229 protein BAA_0633.